A 217-amino-acid polypeptide reads, in one-letter code: Large ribosomal subunit protein uL1 (217 aa).

The protein belongs to the universal ribosomal protein uL1 family. As to quaternary structure, part of the 50S ribosomal subunit.

Binds directly to 23S rRNA. Probably involved in E site tRNA release. Functionally, protein L1 is also a translational repressor protein, it controls the translation of its operon by binding to its mRNA. The sequence is that of Large ribosomal subunit protein uL1 from Aeropyrum pernix (strain ATCC 700893 / DSM 11879 / JCM 9820 / NBRC 100138 / K1).